The chain runs to 194 residues: Pyridoxal 5'-phosphate synthase subunit PdxT (194 aa).

Residue 54–56 (GES) coordinates L-glutamine. C83 (nucleophile) is an active-site residue. Residues R110 and 139–140 (IR) each bind L-glutamine. Catalysis depends on charge relay system residues H175 and E177.

It belongs to the glutaminase PdxT/SNO family. As to quaternary structure, in the presence of PdxS, forms a dodecamer of heterodimers. Only shows activity in the heterodimer.

It catalyses the reaction aldehydo-D-ribose 5-phosphate + D-glyceraldehyde 3-phosphate + L-glutamine = pyridoxal 5'-phosphate + L-glutamate + phosphate + 3 H2O + H(+). The catalysed reaction is L-glutamine + H2O = L-glutamate + NH4(+). Its pathway is cofactor biosynthesis; pyridoxal 5'-phosphate biosynthesis. Functionally, catalyzes the hydrolysis of glutamine to glutamate and ammonia as part of the biosynthesis of pyridoxal 5'-phosphate. The resulting ammonia molecule is channeled to the active site of PdxS. In Methanoregula boonei (strain DSM 21154 / JCM 14090 / 6A8), this protein is Pyridoxal 5'-phosphate synthase subunit PdxT.